The chain runs to 1495 residues: Collagen alpha-1(XVII) chain (1495 aa).

Positions 1–17 (MDSVTKKTRQDGSEVTE) are enriched in basic and acidic residues. A disordered region spans residues 1 to 138 (MDSVTKKTRQ…VRLQSASPSG (138 aa)). Over 1 to 435 (MDSVTKKTRQ…CGSCCSWWKW (435 aa)) the chain is Cytoplasmic. A nonhelical region (NC16) region spans residues 1-535 (MDSVTKKTRQ…IERGYFRGER (535 aa)). Polar residues predominate over residues 19–32 (QGGSSSGLKTSSHT). The span at 51–63 (SSGSGRLNSSSSG) shows a compositional bias: low complexity. Composition is skewed to polar residues over residues 64–80 (YRQT…SPGS) and 95–104 (EGSSSANSSP). Residues 436-456 (LLGLLLAWLLLLGLLFGLIAL) form a helical; Signal-anchor for type II membrane protein membrane-spanning segment. The Extracellular portion of the chain corresponds to 457–1495 (AEEVRKLKSR…GRRRRRSVGV (1039 aa)). 7 disordered regions span residues 532 to 824 (RGER…EKGS), 847 to 999 (DLQG…SSSQ), 1160 to 1185 (EFSG…SSGI), 1201 to 1226 (SISG…TGLL), 1251 to 1278 (RSYI…LVAG), 1295 to 1336 (GGSI…GSYG), and 1396 to 1416 (MSYT…PGIS). Positions 536–1482 (GEPGMKGDMG…KGEKGEKGEQ (947 aa)) are triple-helical region. 2 stretches are compositionally biased toward low complexity: residues 702–711 (PGAKGPAGQA) and 761–773 (RPGA…APGK). Residues 786 to 807 (PGPPGPPGPIGPTGPPGVPGPV) are compositionally biased toward pro residues. Positions 809-818 (PAGLPGQQGP) are enriched in low complexity. Composition is skewed to pro residues over residues 871 to 886 (PRGP…PPGR), 901 to 910 (PPGPPGPPGP), 946 to 955 (PPGPPGPPGP), 981 to 993 (PPGP…PPGP), 1167 to 1179 (PPGP…PPGI), 1208 to 1218 (PPGPPGPPGPP), and 1257 to 1269 (PPGP…PPGP). Gly residues predominate over residues 1296-1308 (GSIGAEGSHGGSL). The segment covering 1309 to 1336 (GASSSYGSSMSSSMSSYSASMGSDGSYG) has biased composition (low complexity). The segment covering 1403–1413 (PPGPPGPPGPP) has biased composition (pro residues). The N-linked (GlcNAc...) asparagine glycan is linked to Asn1424. The tract at residues 1435 to 1495 (THGTVRGPPG…GRRRRRSVGV (61 aa)) is disordered. Residues 1472-1481 (PKGEKGEKGE) are compositionally biased toward basic and acidic residues. The interval 1483–1495 (MYSGRRRRRSVGV) is nonhelical region (NC1). Positions 1486–1495 (GRRRRRSVGV) are enriched in basic residues.

Homotrimers of alpha 1(XVII)chains. Post-translationally, the intracellular/endo domain is disulfide-linked. Prolines at the third position of the tripeptide repeating unit (G-X-Y) are hydroxylated in some or all of the chains. In terms of processing, the ectodomain is shedded from the surface of keratinocytes resulting in a 120-kDa soluble form, also named as 120 kDa linear IgA disease antigen homolog. The shedding is mediated by membrane-bound metalloproteases. In terms of tissue distribution, cornea specific.

Its subcellular location is the cell junction. It is found in the hemidesmosome. The protein resides in the membrane. It localises to the secreted. The protein localises to the extracellular space. Its subcellular location is the extracellular matrix. It is found in the basement membrane. Its function is as follows. May play a role in the integrity of hemidesmosome and the attachment of basal keratinocytes to the underlying basement membrane. Functionally, the 120 kDa linear IgA disease antigen homolog is an anchoring filament component involved in dermal-epidermal cohesion. This Gallus gallus (Chicken) protein is Collagen alpha-1(XVII) chain (COL17A1).